Here is a 383-residue protein sequence, read N- to C-terminus: S-adenosylmethionine synthase 1 (383 aa).

Histidine 15 is an ATP binding site. Aspartate 17 serves as a coordination point for Mg(2+). A K(+)-binding site is contributed by glutamate 43. Residues glutamate 56 and glutamine 99 each coordinate L-methionine. Residues 99–109 form a flexible loop region; the sequence is QSPDIDLGVSR. Residues 162-164, 228-229, aspartate 237, 243-244, alanine 260, and lysine 264 each bind ATP; these read DGK, RF, and RK. Residue aspartate 237 participates in L-methionine binding. Lysine 268 lines the L-methionine pocket.

The protein belongs to the AdoMet synthase family. In terms of assembly, homotetramer; dimer of dimers. The cofactor is Mg(2+). K(+) serves as cofactor.

It localises to the cytoplasm. It catalyses the reaction L-methionine + ATP + H2O = S-adenosyl-L-methionine + phosphate + diphosphate. Its pathway is amino-acid biosynthesis; S-adenosyl-L-methionine biosynthesis; S-adenosyl-L-methionine from L-methionine: step 1/1. Catalyzes the formation of S-adenosylmethionine (AdoMet) from methionine and ATP. The overall synthetic reaction is composed of two sequential steps, AdoMet formation and the subsequent tripolyphosphate hydrolysis which occurs prior to release of AdoMet from the enzyme. This Rhodospirillum rubrum (strain ATCC 11170 / ATH 1.1.1 / DSM 467 / LMG 4362 / NCIMB 8255 / S1) protein is S-adenosylmethionine synthase 1.